A 393-amino-acid polypeptide reads, in one-letter code: Cytotoxic and regulatory T-cell molecule (393 aa).

The first 16 residues, 1-16 (MWWGALSLLFWVPVQA), serve as a signal peptide directing secretion. Positions 17-111 (AFLKMETVTV…SVKTKQVRVT (95 aa)) constitute an Ig-like V-type domain. Over 17-289 (AFLKMETVTV…HTGLARRKSG (273 aa)) the chain is Extracellular. 2 disulfide bridges follow: Cys-36-Cys-96 and Cys-139-Cys-194. N-linked (GlcNAc...) asparagine glycosylation is found at Asn-85 and Asn-176. Residues 119–208 (PTVEALVLRR…EGLHGRKLVA (90 aa)) form the Ig-like C2-type domain. The segment covering 218–228 (DQETSDQETSD) has biased composition (acidic residues). Residues 218-280 (DQETSDQETS…GLSTEASAQH (63 aa)) form a disordered region. Residues 229–246 (APEQSSLSSQALQQPTST) show a composition bias toward low complexity. Residues 247–256 (VSMMENSSIP) show a composition bias toward polar residues. Positions 257 to 267 (ETDKEEKEHAT) are enriched in basic and acidic residues. Residues 270 to 280 (PGLSTEASAQH) show a composition bias toward polar residues. A helical transmembrane segment spans residues 290-310 (ILLLTLVSFLIFILFIIVQLF). Topologically, residues 311–393 (IMKLRKAHVV…KHSRVPESIV (83 aa)) are cytoplasmic. A disordered region spans residues 333–356 (ESYRSRSNNEETSSQENSSQAPQS). The segment covering 342–352 (EETSSQENSSQ) has biased composition (low complexity). The short motif at 390–393 (ESIV) is the PDZ-binding element.

It belongs to the nectin family. In terms of assembly, monomer. May form homodimer (via Ig-like V-type domain). Interacts (via Ig-like V-type domain) with CADM1 (via Ig-like V-type domain); the interaction competes with CRTAM homodimerization and CADM1 homodimerization. Interacts (via PDZ-binding motif) with SCRIB (via PDZ domain 3); the interaction promotes CRTAM and SCRIB polarization in a subset of CD4+ T-cells. In terms of tissue distribution, in the immune system, expression is restricted to activated class-I MHC-restricted cells, including NKT, NK and CD8+ T-cells (at protein level). Transiently expressed in activated CD8+ T-cells and a subset of activated CD4+ T-cells (at protein level). Expressed in activated intestinal T-cells, specifically intraepithelial CD4+ CD8+ T-cells, intraepithelial CD4+ T-cells and, CD8+ T-cells in the intestine epithelium, lamina propria, Peyer's Patches and mesenteric lymph nodes. Also expressed in spleen, brain and testis.

Its subcellular location is the cell membrane. Functionally, mediates heterophilic cell-cell adhesion which regulates the activation, differentiation and tissue retention of various T-cell subsets. Interaction with CADM1 promotes natural killer (NK) cell cytotoxicity and IFNG/interferon-gamma secretion by CD8+ T-cells in vitro as well as NK cell-mediated rejection of tumors expressing CADM1 in vivo. Regulates CD8+ T-cell proliferation in response to T-cell receptor (TCR) activation. Appears to be dispensable for CD8+ T-cell-mediated cytotoxicity. Interaction with SCRIB promotes the late phase of cellular polarization of a subset of CD4+ T-cells, which in turn regulates TCR-mediated proliferation and IFNG, IL17 and IL22 production. By interacting with CADM1 on CD8+ dendritic cells, regulates the retention of activated CD8+ T-cells within the draining lymph node. Required for the intestinal retention of intraepithelial CD4+ CD8+ T-cells and, to a lesser extent, intraepithelial and lamina propria CD8+ T-cells and CD4+ T-cells. Interaction with CADM1 promotes the adhesion to gut-associated CD103+ dendritic cells, which may facilitate the expression of gut-homing and adhesion molecules on T-cells and the conversion of CD4+ T-cells into CD4+ CD8+ T-cells. The protein is Cytotoxic and regulatory T-cell molecule of Mus musculus (Mouse).